Consider the following 576-residue polypeptide: FACT complex subunit pob3 (576 aa).

3 disordered regions span residues 153-172 (ADANAQPAGSTKNRGRKAAS), 193-213 (KGIKEENGKEENGEEEEEGEE), and 490-576 (MGSS…KVGK). Residues 193–203 (KGIKEENGKEE) show a composition bias toward basic and acidic residues. Residues 204–213 (NGEEEEEGEE) are compositionally biased toward acidic residues. Residues 496–505 (EGVRADRGSA) are compositionally biased toward basic and acidic residues. Composition is skewed to acidic residues over residues 506-528 (DEDEESIDEDFQAESESDVAEEY) and 542-564 (EMNDASDGGGDDDDDDEDVDMSE).

The protein belongs to the SSRP1 family. As to quaternary structure, forms a stable heterodimer with spt16. The spt16-pob3 dimer weakly associates with multiple molecules of nhp6 to form the FACT complex.

The protein resides in the nucleus. It localises to the chromosome. Its function is as follows. Component of the FACT complex, a general chromatin factor that acts to reorganize nucleosomes. The FACT complex is involved in multiple processes that require DNA as a template such as mRNA elongation, DNA replication and DNA repair. During transcription elongation the FACT complex acts as a histone chaperone that both destabilizes and restores nucleosomal structure. It facilitates the passage of RNA polymerase II and transcription by promoting the dissociation of one histone H2A-H2B dimer from the nucleosome, then subsequently promotes the reestablishment of the nucleosome following the passage of RNA polymerase II. The polypeptide is FACT complex subunit pob3 (pob3) (Aspergillus oryzae (strain ATCC 42149 / RIB 40) (Yellow koji mold)).